A 1410-amino-acid chain; its full sequence is Condensin-1 complex subunit CAP-D2 (1410 aa).

A compositionally biased stretch (basic and acidic residues) spans 469 to 480 (LEPTEHASKEST). Disordered stretches follow at residues 469–492 (LEPT…DGEI), 504–525 (HQDS…EKDV), 860–879 (KTKK…NLEA), and 1208–1410 (KEQE…GSRS). The segment covering 869–879 (ESQNTEENLEA) has biased composition (polar residues). Over residues 1208-1226 (KEQEETARNAEVHREKTKT) the composition is skewed to basic and acidic residues. Composition is skewed to acidic residues over residues 1240 to 1284 (PVEE…EEPD) and 1306 to 1319 (IETE…DSEP). Over residues 1323-1339 (QCGTTNPRSLNRKTSGD) the composition is skewed to polar residues. Over residues 1342 to 1365 (IETESEEEQSDSEEEPSDSEEEPD) the composition is skewed to acidic residues. A compositionally biased stretch (polar residues) spans 1368–1379 (QCGTTNPRSLNQ).

This sequence belongs to the CND1 (condensin subunit 1) family. In terms of assembly, component of the condensin complex. As to expression, present in buds.

It localises to the chromosome. Its subcellular location is the nucleus. Essential protein. Regulatory subunit of the condensin complex, a complex required for conversion of interphase chromatin into mitotic-like condense chromosomes. The condensin complex probably introduces positive supercoils into relaxed DNA in the presence of type I topoisomerases and converts nicked DNA into positive knotted forms in the presence of type II topoisomerases. Required for fertility, growth and euchromatin organization, but not for sister chromatid cohesion. Necessary to maintain normal structural integrity of the meiotic chromosomes during the two nuclear divisions of gametogenesis, especially to maintain compaction of the centromeric repeats and 45S rDNA. Also seems to be involved in crossover formation during meiotic prophase I. Prevents centromeric and pericentromeric heterochromatin repeats association. Contributes to the induction of stress-responsive genes in response to stress treatment. This is Condensin-1 complex subunit CAP-D2 from Arabidopsis thaliana (Mouse-ear cress).